Consider the following 141-residue polypeptide: 16 kDa protein (141 aa).

The interval 95-116 (ESSSATRKKSHNSKNSKKKFKE) is disordered. The segment covering 100-113 (TRKKSHNSKNSKKK) has biased composition (basic residues).

In Tobacco rattle virus (strain PSG), this protein is 16 kDa protein.